The following is a 530-amino-acid chain: Bifunctional purine biosynthesis protein PurH (530 aa).

Residues 1–148 (MNNARPIHRA…KNHKDVAIVV (148 aa)) enclose the MGS-like domain.

The protein belongs to the PurH family.

It catalyses the reaction (6R)-10-formyltetrahydrofolate + 5-amino-1-(5-phospho-beta-D-ribosyl)imidazole-4-carboxamide = 5-formamido-1-(5-phospho-D-ribosyl)imidazole-4-carboxamide + (6S)-5,6,7,8-tetrahydrofolate. The enzyme catalyses IMP + H2O = 5-formamido-1-(5-phospho-D-ribosyl)imidazole-4-carboxamide. It participates in purine metabolism; IMP biosynthesis via de novo pathway; 5-formamido-1-(5-phospho-D-ribosyl)imidazole-4-carboxamide from 5-amino-1-(5-phospho-D-ribosyl)imidazole-4-carboxamide (10-formyl THF route): step 1/1. The protein operates within purine metabolism; IMP biosynthesis via de novo pathway; IMP from 5-formamido-1-(5-phospho-D-ribosyl)imidazole-4-carboxamide: step 1/1. The protein is Bifunctional purine biosynthesis protein PurH of Vibrio cholerae serotype O1 (strain ATCC 39541 / Classical Ogawa 395 / O395).